We begin with the raw amino-acid sequence, 237 residues long: Lysophospholipase-like protein 1 (237 aa).

Position 2 is an N-acetylalanine (Ala-2). Active-site charge relay system residues include Ser-124, Asp-179, and His-211.

This sequence belongs to the AB hydrolase superfamily. AB hydrolase 2 family.

The protein localises to the cytoplasm. It localises to the cytosol. It catalyses the reaction S-hexadecanoyl-L-cysteinyl-[protein] + H2O = L-cysteinyl-[protein] + hexadecanoate + H(+). In terms of biological role, palmitoyl thioesterase that catalyzes depalmitoylation of CGAS and KCNMA1. Acts as a regulator of innate immunity by mediating depalmitoylation of CGAS, thereby preventing CGAS homodimerization and cyclic GMP-AMP synthase activity. Does not exhibit phospholipase nor triacylglycerol lipase activity, able to hydrolyze only short chain substrates due to its shallow active site. The protein is Lysophospholipase-like protein 1 of Pongo abelii (Sumatran orangutan).